A 154-amino-acid polypeptide reads, in one-letter code: Small ribosomal subunit protein uS19B (154 aa).

Serine 63 bears the Phosphoserine mark.

It belongs to the universal ribosomal protein uS19 family. As to quaternary structure, component of the small ribosomal subunit (SSU). Mature yeast ribosomes consist of a small (40S) and a large (60S) subunit. The 40S small subunit contains 1 molecule of ribosomal RNA (18S rRNA) and at least 33 different proteins. The large 60S subunit contains 3 rRNA molecules (25S, 5.8S and 5S rRNA) and at least 46 different proteins.

The protein resides in the cytoplasm. The protein localises to the nucleus. Its subcellular location is the nucleolus. Functionally, component of the ribosome, a large ribonucleoprotein complex responsible for the synthesis of proteins in the cell. The small ribosomal subunit (SSU) binds messenger RNAs (mRNAs) and translates the encoded message by selecting cognate aminoacyl-transfer RNA (tRNA) molecules. The large subunit (LSU) contains the ribosomal catalytic site termed the peptidyl transferase center (PTC), which catalyzes the formation of peptide bonds, thereby polymerizing the amino acids delivered by tRNAs into a polypeptide chain. The nascent polypeptides leave the ribosome through a tunnel in the LSU and interact with protein factors that function in enzymatic processing, targeting, and the membrane insertion of nascent chains at the exit of the ribosomal tunnel. uS19 is involved in the nuclear export of the small ribosomal subunit precursor. Has a role in the late stage of the assembly of pre-40S particles within the nucleus and controls their export to the cytoplasm. The chain is Small ribosomal subunit protein uS19B (rps1502) from Schizosaccharomyces pombe (strain 972 / ATCC 24843) (Fission yeast).